The following is a 225-amino-acid chain: Small ribosomal subunit protein uS3 (225 aa).

The KH type-2 domain occupies 16–85 (VCEYVVKETE…TPQIEVKDVK (70 aa)). The interval 202 to 225 (EVGTESKADQTDVEGRETGNAEES) is disordered. A compositionally biased stretch (basic and acidic residues) spans 205–225 (TESKADQTDVEGRETGNAEES).

Belongs to the universal ribosomal protein uS3 family. Part of the 30S ribosomal subunit.

In terms of biological role, binds the lower part of the 30S subunit head. In Thermoplasma acidophilum (strain ATCC 25905 / DSM 1728 / JCM 9062 / NBRC 15155 / AMRC-C165), this protein is Small ribosomal subunit protein uS3.